We begin with the raw amino-acid sequence, 497 residues long: MALWRGSAYAGFLALAVGCVFLLEPELPGSALRSLWSSLCLGPAPAPPGPVSPEGRLAAAWDALIVRPVRRWRRVAVGVNACVDVVLSGVKLLQALGLSPGNGKDHSILHSRNDLEEAFIHFMGKGAAAERFFSDKETFHDIAQVASEFPGAQHYVGGNAALIGQKFAANSDLKVLLCGPVGPKLHELLDDNVFVPPESLQEVDEFHLILEYQAGEEWGQLKAPHANRFIFSHDLSNGAMNMLEVFVSSLEEFQPDLVVLSGLHMMEGQSKELQRKRLLEVVTSISDIPTGIPVHLELASMTNRELMSSIVHQQVFPAVTSLGLNEQELLFLTQSASGPHSSLSSWNGVPDVGMVSDILFWILKEHGRSKSRASDLTRIHFHTLVYHILATVDGHWANQLAAVAAGARVAGTQACATETIDTSRVSLRAPQEFMTSHSEAGSRIVLNPNKPVVEWHREGISFHFTPVLVCKDPIRTVGLGDAISAEGLFYSEVHPHY.

An N-terminal signal peptide occupies residues 1-22 (MALWRGSAYAGFLALAVGCVFL). In terms of domain architecture, ADPK spans 52-497 (SPEGRLAAAW…LFYSEVHPHY (446 aa)). Mg(2+) is bound by residues E297, E328, and D481. D481 (proton acceptor) is an active-site residue.

The protein belongs to the ADP-dependent glucokinase family. In terms of assembly, monomer. Mg(2+) serves as cofactor.

It is found in the secreted. It catalyses the reaction D-glucose + ADP = D-glucose 6-phosphate + AMP + H(+). The protein operates within carbohydrate degradation; glycolysis. Catalyzes the phosphorylation of D-glucose to D-glucose 6-phosphate using ADP as the phosphate donor. GDP and CDP can replace ADP, but with reduced efficiency. This is ADP-dependent glucokinase (ADPGK) from Homo sapiens (Human).